Reading from the N-terminus, the 802-residue chain is Endoplasmin (802 aa).

An N-terminal signal peptide occupies residues 1–21 (MRVLWVLGLCCVLLTFGFVRA). Residues 42-44 (SRT) carry the SRT pseudosubstrate motif motif. Asn-62 carries N-linked (GlcNAc...) asparagine glycosylation. Residue Ser-64 is modified to Phosphoserine. Asn-107 is a glycosylation site (N-linked (GlcNAc...) asparagine). Residues Asn-107, Asp-149, and Asn-162 each contribute to the ATP site. Position 168 is an N6-(2-hydroxyisobutyryl)lysine (Lys-168). Ser-172 bears the Phosphoserine mark. Phe-199 is a binding site for ATP. N-linked (GlcNAc...) asparagine glycosylation is present at Asn-217. Over residues 290-317 (EEPLEEDEAAKEEKEESDDEAAVEEEEE) the composition is skewed to acidic residues. The tract at residues 290–323 (EEPLEEDEAAKEEKEESDDEAAVEEEEEEKKPKT) is disordered. Residues Ser-306 and Ser-403 each carry the phosphoserine modification. Lys-404 bears the N6-succinyllysine mark. N-linked (GlcNAc...) asparagine glycosylation occurs at Asn-445. Phosphoserine is present on Ser-447. N6-acetyllysine is present on Lys-479. Residues Asn-481 and Asn-502 are each glycosylated (N-linked (GlcNAc...) asparagine). Lys-633 bears the N6-succinyllysine mark. The segment at 749 to 802 (IDPEAQVEEEPEEEPEDTSEDAEDSEQDEGEEMDAGTEEEEEETEKESTEKDEL) is disordered. Positions 753 to 793 (AQVEEEPEEEPEDTSEDAEDSEQDEGEEMDAGTEEEEEETE) are enriched in acidic residues. At Thr-785 the chain carries Phosphothreonine. Positions 799-802 (KDEL) match the Prevents secretion from ER motif.

Belongs to the heat shock protein 90 family. As to quaternary structure, homodimer; disulfide-linked. Component of an EIF2 complex at least composed of CELF1/CUGBP1, CALR, CALR3, EIF2S1, EIF2S2, HSP90B1 and HSPA5. Part of a large chaperone multiprotein complex comprising DNAJB11, HSP90B1, HSPA5, HYOU, PDIA2, PDIA4, PDIA6, PPIB, SDF2L1, UGGT1 and very small amounts of ERP29, but not, or at very low levels, CALR nor CANX. Hyperglycosylated form interacts with OS9; promoting its degradation by the endoplasmic reticulum associated degradation (ERAD). Interacts with AIMP1; regulates its retention in the endoplasmic reticulum. Interacts with CNPY3; this interaction is disrupted in the presence of ATP. Interacts with TLR4, TLR9 and TLR11, but not with TLR3. Interacts with MZB1 in a calcium-dependent manner. Interacts with METTL23. Interacts with IL1B; the interaction facilitates cargo translocation into the ERGIC. Interacts with EIF2AK3. Post-translationally, phosphorylated by CK2. In terms of processing, N-glycosylated cotranslationally at Asn-217 by STT3A-containing OST-A complex: this glycosylation is constitutive. In response to various stress, 5 additional facultative sites (Asn-62, Asn-107, Asn-445, Asn-481 and Asn-502) can be glycosylated post-translationally by STT3B-containing OST-B complex, leading to a hyperglycosylated form that is degraded by the ER-associated degradation (ERAD) pathway. In normal conditions, the OST-A complex together with CCDC134 prevent glycosylation at facultative sites during protein folding, thereby preventing hyperglycosylation. Mechanistically, nascent HSP90B1 is tethered during translation to a specialized CCDC134-containing translocon that forms a microenvironment for its folding, in which STT3A associates with the SRT pseudosubstrate motif, and prevents access to facultative glycosylation sites until folding is completed, rendering its facultative sites inaccessible to the OST-B complex.

The protein localises to the endoplasmic reticulum lumen. Its subcellular location is the sarcoplasmic reticulum lumen. It is found in the melanosome. It carries out the reaction ATP + H2O = ADP + phosphate + H(+). Functionally, ATP-dependent chaperone involved in the processing of proteins in the endoplasmic reticulum, regulating their transport. Together with MESD, acts as a modulator of the Wnt pathway by promoting the folding of LRP6, a coreceptor of the canonical Wnt pathway. When associated with CNPY3, required for proper folding of Toll-like receptors. Promotes folding and trafficking of TLR4 to the cell surface. May participate in the unfolding of cytosolic leaderless cargos (lacking the secretion signal sequence) such as the interleukin 1/IL-1 to facilitate their translocation into the ERGIC (endoplasmic reticulum-Golgi intermediate compartment) and secretion; the translocation process is mediated by the cargo receptor TMED10. The sequence is that of Endoplasmin (Hsp90b1) from Mus musculus (Mouse).